The primary structure comprises 361 residues: Phospho-N-acetylmuramoyl-pentapeptide-transferase (361 aa).

A run of 10 helical transmembrane segments spans residues 27–47 (ILAS…MIRW), 70–90 (GTPT…CLLW), 97–117 (SLWL…VDDY), 134–154 (YFWQ…NASL), 167–187 (TVTW…IVGS), 199–219 (GLAI…AYAS), 236–256 (TGEL…FLWY), 263–283 (VFMG…VAVV), 288–308 (LVLL…ILQV), and 338–358 (KVIV…LATL).

It belongs to the glycosyltransferase 4 family. MraY subfamily. The cofactor is Mg(2+).

It is found in the cell inner membrane. The catalysed reaction is UDP-N-acetyl-alpha-D-muramoyl-L-alanyl-gamma-D-glutamyl-meso-2,6-diaminopimeloyl-D-alanyl-D-alanine + di-trans,octa-cis-undecaprenyl phosphate = di-trans,octa-cis-undecaprenyl diphospho-N-acetyl-alpha-D-muramoyl-L-alanyl-D-glutamyl-meso-2,6-diaminopimeloyl-D-alanyl-D-alanine + UMP. Its pathway is cell wall biogenesis; peptidoglycan biosynthesis. Functionally, catalyzes the initial step of the lipid cycle reactions in the biosynthesis of the cell wall peptidoglycan: transfers peptidoglycan precursor phospho-MurNAc-pentapeptide from UDP-MurNAc-pentapeptide onto the lipid carrier undecaprenyl phosphate, yielding undecaprenyl-pyrophosphoryl-MurNAc-pentapeptide, known as lipid I. The chain is Phospho-N-acetylmuramoyl-pentapeptide-transferase from Legionella pneumophila subsp. pneumophila (strain Philadelphia 1 / ATCC 33152 / DSM 7513).